Reading from the N-terminus, the 507-residue chain is ATP synthase subunit alpha, chloroplastic (507 aa).

Residue 170-177 participates in ATP binding; it reads GDRQTGKT. Thr257 carries the post-translational modification Phosphothreonine.

It belongs to the ATPase alpha/beta chains family. F-type ATPases have 2 components, CF(1) - the catalytic core - and CF(0) - the membrane proton channel. CF(1) has five subunits: alpha(3), beta(3), gamma(1), delta(1), epsilon(1). CF(0) has four main subunits: a, b, b' and c.

It localises to the plastid. The protein localises to the chloroplast thylakoid membrane. It catalyses the reaction ATP + H2O + 4 H(+)(in) = ADP + phosphate + 5 H(+)(out). Produces ATP from ADP in the presence of a proton gradient across the membrane. The alpha chain is a regulatory subunit. In Aethionema cordifolium (Lebanon stonecress), this protein is ATP synthase subunit alpha, chloroplastic.